The primary structure comprises 433 residues: Trigger factor (433 aa).

The PPIase FKBP-type domain maps to 163–248 (GDFVTFDFKG…IKEIKVKELP (86 aa)).

The protein belongs to the FKBP-type PPIase family. Tig subfamily.

The protein localises to the cytoplasm. The catalysed reaction is [protein]-peptidylproline (omega=180) = [protein]-peptidylproline (omega=0). Its function is as follows. Involved in protein export. Acts as a chaperone by maintaining the newly synthesized protein in an open conformation. Functions as a peptidyl-prolyl cis-trans isomerase. The sequence is that of Trigger factor from Geotalea uraniireducens (strain Rf4) (Geobacter uraniireducens).